Here is a 435-residue protein sequence, read N- to C-terminus: AP-2 complex subunit mu (435 aa).

The 265-residue stretch at 170–434 (RNELFLDVLE…IGRSGIYETR (265 aa)) folds into the MHD domain. A 1,2-diacyl-sn-glycero-3-phospho-(1D-myo-inositol-3,4,5-trisphosphate) is bound by residues lysine 341, lysine 345, and lysine 354.

Belongs to the adaptor complexes medium subunit family. Adaptor protein complex 2 (AP-2) is a heterotetramer composed of two large adaptins (alpha-type subunit and beta-type subunit), a medium adaptin (mu-type subunit) and a small adaptin (sigma-type subunit).

Its subcellular location is the cell membrane. The protein resides in the membrane. It is found in the coated pit. In terms of biological role, component of the adaptor complexes which link clathrin to receptors in coated vesicles. Clathrin-associated protein complexes are believed to interact with the cytoplasmic tails of membrane proteins, leading to their selection and concentration. AP50 is a subunit of the plasma membrane adaptor. The complex binds polyphosphoinositide-containing lipids. The chain is AP-2 complex subunit mu (ap2m1) from Xenopus laevis (African clawed frog).